A 238-amino-acid chain; its full sequence is Uridylate kinase (238 aa).

12–15 (KLSG) contributes to the ATP binding site. Position 54 (G54) interacts with UMP. ATP-binding residues include G55 and R59. Residues D74 and 135–142 (TGNPYFTT) each bind UMP. Positions 162, 163, 168, and 171 each coordinate ATP.

The protein belongs to the UMP kinase family. Homohexamer.

The protein localises to the cytoplasm. It catalyses the reaction UMP + ATP = UDP + ADP. It functions in the pathway pyrimidine metabolism; CTP biosynthesis via de novo pathway; UDP from UMP (UMPK route): step 1/1. Inhibited by UTP. In terms of biological role, catalyzes the reversible phosphorylation of UMP to UDP. This Rhodopseudomonas palustris (strain ATCC BAA-98 / CGA009) protein is Uridylate kinase.